A 681-amino-acid chain; its full sequence is Protein asunder (681 aa).

The segment at 574-619 (PGASHLRSYTESPLSPERLEPTSSASNSSSSILKASKRRMSSSGQR) is disordered. The short motif at 606-612 (LKASKRR) is the Nuclear localization signal (NLS) element.

It belongs to the Integrator subunit 13 family. In terms of assembly, belongs to the multiprotein complex Integrator, at least composed of IntS1, IntS2, IntS3, IntS4, omd/IntS5, IntS6, defl/IntS7, IntS8, IntS9, IntS10, IntS11, IntS12, asun/IntS13, IntS14 and IntS15. The core complex associates with protein phosphatase 2A subunits mts/PP2A and Pp2A-29B, to form the Integrator-PP2A (INTAC) complex. Post-translationally, phosphorylated.

The protein resides in the nucleus. It is found in the cytoplasm. The protein localises to the perinuclear region. In terms of biological role, component of the integrator complex, a multiprotein complex that terminates RNA polymerase II (Pol II) transcription in the promoter-proximal region of genes. The integrator complex provides a quality checkpoint during transcription elongation by driving premature transcription termination of transcripts that are unfavorably configured for transcriptional elongation: the complex terminates transcription by (1) catalyzing dephosphorylation of the C-terminal domain (CTD) of Pol II subunit Polr2A/Rbp1 and Spt5, and (2) degrading the exiting nascent RNA transcript via endonuclease activity. The integrator complex is also involved in the 3'-end processing of the U7 snRNA, and also the spliceosomal snRNAs U1, U2, U4 and U5. The chain is Protein asunder (asun) from Drosophila virilis (Fruit fly).